The primary structure comprises 534 residues: MSKEASQDSRSITPVEAVEPLEVVDAEKNVTTSPYNGSGTVEDPFIVEFQQDDKSNPMNWGQFRKWFLTSIVTFSVFAVTFTSSAYSVSAEEIMTEFDISSTLFITGVSVFVLGFAIGPAVWGPLVTPHDERSNANRASLQSTRSELYGRQMPWIASHTAMVAFMAGSAGSPNIATLIVLRFLAGTFGGSPLVNSGGAIADLFPPAQRGLAMTIYCVAPFLGPILGPIVGGFATEYIGWRWVQGMCTIFIGVIGIIGVIFVPETYGPVLLQRKANALSKADGKVYISVLQKNQGKKQPSEVFGRALIRPWVLLFREPIVLIASLYMAIIYGTVYMFLGAMPIVYNELRGWSPGFGGLAFLGMMVGIIIGLGYAIWDNNGRYMKLDPSKRTAESRLPPAIAGAVALPIGMFAFAWTNYPSIHWAVSIVLSAPFGFGVVLVILPIVNYLIDSYTVYAASVLAAAAVFRSIMGAVFPLFTSQMYHNLGIHWATSIPAFLTLVCMPFPFFMYRYGAVVREKCKYAAEAAQIMKKMQGR.

N-linked (GlcNAc...) asparagine glycans are attached at residues Asn29 and Asn36. 12 helical membrane-spanning segments follow: residues 66–86, 103–123, 160–180, 182–202, 209–229, 241–261, 318–338, 354–374, 395–415, 424–444, 456–476, and 486–506; these read WFLTSIVTFSVFAVTFTSSAY, LFITGVSVFVLGFAIGPAVWG, AMVAFMAGSAGSPNIATLIVL, FLAGTFGGSPLVNSGGAIADL, GLAMTIYCVAPFLGPILGPIV, WVQGMCTIFIGVIGIIGVIFV, IVLIASLYMAIIYGTVYMFLG, FGGLAFLGMMVGIIIGLGYAI, LPPAIAGAVALPIGMFAFAWT, VSIVLSAPFGFGVVLVILPIV, ASVLAAAAVFRSIMGAVFPLF, and IHWATSIPAFLTLVCMPFPFF.

The protein belongs to the major facilitator superfamily. Sugar transporter (TC 2.A.1.1) family.

The protein resides in the membrane. Functionally, major facilitator-type transporter; part of the gene cluster that mediates the biosynthesis of sorbicillinoids, a diverse group of yellow secondary metabolites that restrict growth of competing pathogenic fungi but not of bacteria. The polypeptide is Major facilitator-type transporter sor6 (Hypocrea jecorina (strain QM6a) (Trichoderma reesei)).